The following is a 136-amino-acid chain: Small ribosomal subunit protein uS9 (136 aa).

The interval 97–136 (SPDNRKPLKTEGHLSRDPRAKERRKYGLKKARKAPQFSKR) is disordered. Over residues 98-116 (PDNRKPLKTEGHLSRDPRA) the composition is skewed to basic and acidic residues. The span at 117–136 (KERRKYGLKKARKAPQFSKR) shows a compositional bias: basic residues.

Belongs to the universal ribosomal protein uS9 family.

This is Small ribosomal subunit protein uS9 from Prochlorococcus marinus (strain MIT 9301).